The sequence spans 537 residues: Membrane protein insertase YidC (537 aa).

5 helical membrane-spanning segments follow: residues Ser6 to Asp26, Leu341 to Leu363, Leu411 to Phe431, Leu449 to Leu469, and Pro490 to Val510.

The protein belongs to the OXA1/ALB3/YidC family. Type 1 subfamily. In terms of assembly, interacts with the Sec translocase complex via SecD. Specifically interacts with transmembrane segments of nascent integral membrane proteins during membrane integration.

Its subcellular location is the cell inner membrane. Functionally, required for the insertion and/or proper folding and/or complex formation of integral membrane proteins into the membrane. Involved in integration of membrane proteins that insert both dependently and independently of the Sec translocase complex, as well as at least some lipoproteins. Aids folding of multispanning membrane proteins. This Actinobacillus succinogenes (strain ATCC 55618 / DSM 22257 / CCUG 43843 / 130Z) protein is Membrane protein insertase YidC.